The primary structure comprises 69 residues: DNA gyrase inhibitor YacG (69 aa).

Zn(2+) contacts are provided by Cys13, Cys16, Cys32, and Cys36.

This sequence belongs to the DNA gyrase inhibitor YacG family. Interacts with GyrB. Requires Zn(2+) as cofactor.

Functionally, inhibits all the catalytic activities of DNA gyrase by preventing its interaction with DNA. Acts by binding directly to the C-terminal domain of GyrB, which probably disrupts DNA binding by the gyrase. This Neisseria meningitidis serogroup B (strain ATCC BAA-335 / MC58) protein is DNA gyrase inhibitor YacG.